A 63-amino-acid polypeptide reads, in one-letter code: Large ribosomal subunit protein bL28 (63 aa).

This sequence belongs to the bacterial ribosomal protein bL28 family.

The sequence is that of Large ribosomal subunit protein bL28 from Kosmotoga olearia (strain ATCC BAA-1733 / DSM 21960 / TBF 19.5.1).